A 211-amino-acid chain; its full sequence is WUSCHEL-related homeobox 14 (211 aa).

Residues 91–155 (STRHRWTPTS…NRRARSKRKQ (65 aa)) constitute a DNA-binding region (homeobox; WUS-type). Residues 147–183 (RRARSKRKQPQTTTANGQADDVAVTTEERRSCGDSGG) are disordered.

Belongs to the WUS homeobox family. In terms of tissue distribution, expressed in root vasculature, pericycle and stamen. Expressed in the procambium during stem maturation.

It is found in the nucleus. Functionally, acts redundantly with WOX4 downstream of the TDR/PXY receptor kinase to regulate procambial cell proliferation and differentiation in vascular tissue, independently of any role in vascular. Involved in the regulation of gibberellin (GA) biosynthesis pathway. Positively regulates the expression of the GA biosynthesis gene GA3OX1, and negatively regulates the expression of GA2OX1 during secondary growth, which increases bioactive GA content in the inflorescence stem. Promotes vascular cell differentiation in the inflorescence stem. Its function is as follows. Transcription factor which may be involved in developmental processes. The chain is WUSCHEL-related homeobox 14 (WOX14) from Arabidopsis thaliana (Mouse-ear cress).